A 785-amino-acid chain; its full sequence is Probable ATP-dependent RNA helicase ddx17 (785 aa).

4 stretches are compositionally biased toward low complexity: residues Met1–Gly11, Ser18–Ser37, Ser49–Ser95, and Gly105–Ser177. The segment at Met1–Ser233 is disordered. The span at Lys178–Gly191 shows a compositional bias: polar residues. Residues Pro192–Ser233 are compositionally biased toward low complexity. The Q motif motif lies at Met384–Ser412. One can recognise a Helicase ATP-binding domain in the interval Trp415–Val590. Ala428–Thr435 contacts ATP. The DEAD box motif lies at Asp538–Asp541. Positions Asn602–Ser763 constitute a Helicase C-terminal domain. The segment covering Val764 to Lys774 has biased composition (polar residues). The segment at Val764–Tyr785 is disordered.

This sequence belongs to the DEAD box helicase family. DDX5/DBP2 subfamily.

The protein resides in the cytoplasm. It is found in the nucleus. It catalyses the reaction ATP + H2O = ADP + phosphate + H(+). Its function is as follows. Probable ATP-dependent RNA helicase which may be involved nonsense-mediated mRNA decay and ribosome biogenesis through rRNA processing. The chain is Probable ATP-dependent RNA helicase ddx17 (ddx17) from Dictyostelium discoideum (Social amoeba).